We begin with the raw amino-acid sequence, 72 residues long: Putative membrane protein insertion efficiency factor (72 aa).

The protein belongs to the UPF0161 family.

It localises to the cell inner membrane. Functionally, could be involved in insertion of integral membrane proteins into the membrane. The chain is Putative membrane protein insertion efficiency factor from Myxococcus xanthus (strain DK1622).